A 298-amino-acid chain; its full sequence is Tritrans,polycis-undecaprenyl-diphosphate synthase (geranylgeranyl-diphosphate specific) (298 aa).

The active site involves Asp35. Residue Asp35 coordinates Mg(2+). Substrate is bound by residues 36-39 (GNRR), Arg48, His52, and 80-82 (STE). Residue Asn83 is the Proton acceptor of the active site. Substrate is bound by residues Phe84, Arg86, Arg208, and 214 to 216 (RIS).

This sequence belongs to the UPP synthase family. Homodimer. Mg(2+) is required as a cofactor.

It carries out the reaction geranylgeranyl diphosphate + 7 isopentenyl diphosphate = tri-trans,hepta-cis-undecaprenyl diphosphate + 7 diphosphate. In terms of biological role, catalyzes the sequential condensation of isopentenyl diphosphate (IPP) with geranylgeranyl diphosphate (GGPP) to yield (2Z,6Z,10Z,14Z,18Z,22Z,26Z,30E,34E,38E)-undecaprenyl diphosphate (tritrans,heptacis-UPP). It is probably the precursor of glycosyl carrier lipids. In Methanosarcina mazei (strain ATCC BAA-159 / DSM 3647 / Goe1 / Go1 / JCM 11833 / OCM 88) (Methanosarcina frisia), this protein is Tritrans,polycis-undecaprenyl-diphosphate synthase (geranylgeranyl-diphosphate specific).